The following is a 465-amino-acid chain: Phytase A (465 aa).

The signal sequence occupies residues Met-1–Gly-26. Residues Cys-30 and Cys-39 are joined by a disulfide bond. 1D-myo-inositol hexakisphosphate contacts are provided by Gln-49, Tyr-50, Arg-80, His-81, Arg-84, and Thr-87. Intrachain disulfides connect Cys-70-Cys-412, Cys-213-Cys-463, Cys-262-Cys-280, and Cys-434-Cys-442. The Nucleophile role is filled by His-81. Asn-104 carries an N-linked (GlcNAc...) asparagine glycan. Arg-164 serves as a coordination point for 1D-myo-inositol hexakisphosphate. Residue Asn-205 is glycosylated (N-linked (GlcNAc...) asparagine). Asp-209 provides a ligand contact to 1D-myo-inositol hexakisphosphate. An N-linked (GlcNAc...) asparagine glycan is attached at Asn-228. Lys-299 contributes to the 1D-myo-inositol hexakisphosphate binding site. Asn-337 and Asn-350 each carry an N-linked (GlcNAc...) asparagine glycan. 1D-myo-inositol hexakisphosphate contacts are provided by His-359 and Asp-360. An N-linked (GlcNAc...) asparagine glycan is attached at Asn-374.

The protein belongs to the histidine acid phosphatase family. As to quaternary structure, monomer.

It localises to the secreted. It catalyses the reaction 1D-myo-inositol hexakisphosphate + H2O = 1D-myo-inositol 1,2,4,5,6-pentakisphosphate + phosphate. The catalysed reaction is 1D-myo-inositol 1,2,4,5,6-pentakisphosphate + H2O = 1D-myo-inositol 1,2,5,6-tetrakisphosphate + phosphate. The enzyme catalyses 1D-myo-inositol 1,2,5,6-tetrakisphosphate + H2O = 1D-myo-inositol 1,2,6-trisphosphate + phosphate. It carries out the reaction 1D-myo-inositol 1,2,6-trisphosphate + H2O = 1D-myo-inositol 1,2-bisphosphate + phosphate. It catalyses the reaction 1D-myo-inositol 1,2-bisphosphate + H2O = 1D-myo-inositol 2-phosphate + phosphate. Its function is as follows. Catalyzes the phosphate monoester hydrolysis of phytic acid (myo-inositol hexakisphosphate), which results in the stepwise formation of myo-inositol pentakis-, tetrakis-, tris-, bis-, and monophosphates, as well as the liberation of inorganic phosphate. Myo-inositol 2-monophosphate is the end product. Has a broad substrate specificity and is also able to dephosphorylate other classic acid phosphatase substrates such as p-nitrophenyl phosphate, phenyl phosphate, fructose 1,6-bisphosphate, fructose 6-phosphate, glucose 6-phosphate, ribose 5-phosphate, alpha-glycerophosphate, beta-glycerophosphate, 3-phosphoglycerate, phosphoenolpyruvate, as well as ADP and ATP. The sequence is that of Phytase A (phyA) from Aspergillus fumigatus (strain ATCC MYA-4609 / CBS 101355 / FGSC A1100 / Af293) (Neosartorya fumigata).